A 427-amino-acid chain; its full sequence is 3-phosphoshikimate 1-carboxyvinyltransferase (427 aa).

Lys23, Ser24, and Arg28 together coordinate 3-phosphoshikimate. Lys23 is a phosphoenolpyruvate binding site. Residues Gly97 and Arg125 each coordinate phosphoenolpyruvate. 3-phosphoshikimate is bound by residues Ser169, Ser170, Gln171, Ser197, Asp313, Asn336, and Lys340. Phosphoenolpyruvate is bound at residue Gln171. The active-site Proton acceptor is Asp313. Positions 344, 386, and 411 each coordinate phosphoenolpyruvate.

It belongs to the EPSP synthase family. In terms of assembly, monomer.

It localises to the cytoplasm. It catalyses the reaction 3-phosphoshikimate + phosphoenolpyruvate = 5-O-(1-carboxyvinyl)-3-phosphoshikimate + phosphate. It participates in metabolic intermediate biosynthesis; chorismate biosynthesis; chorismate from D-erythrose 4-phosphate and phosphoenolpyruvate: step 6/7. In terms of biological role, catalyzes the transfer of the enolpyruvyl moiety of phosphoenolpyruvate (PEP) to the 5-hydroxyl of shikimate-3-phosphate (S3P) to produce enolpyruvyl shikimate-3-phosphate and inorganic phosphate. This Yersinia ruckeri protein is 3-phosphoshikimate 1-carboxyvinyltransferase.